We begin with the raw amino-acid sequence, 184 residues long: Peptide deformylase (184 aa).

C92 and H134 together coordinate Fe cation. E135 is an active-site residue. H138 lines the Fe cation pocket.

Belongs to the polypeptide deformylase family. It depends on Fe(2+) as a cofactor.

It carries out the reaction N-terminal N-formyl-L-methionyl-[peptide] + H2O = N-terminal L-methionyl-[peptide] + formate. In terms of biological role, removes the formyl group from the N-terminal Met of newly synthesized proteins. Requires at least a dipeptide for an efficient rate of reaction. N-terminal L-methionine is a prerequisite for activity but the enzyme has broad specificity at other positions. This chain is Peptide deformylase, found in Psychrobacter cryohalolentis (strain ATCC BAA-1226 / DSM 17306 / VKM B-2378 / K5).